A 98-amino-acid polypeptide reads, in one-letter code: NADH-ubiquinone oxidoreductase chain 4L (98 aa).

A run of 3 helical transmembrane segments spans residues 1 to 21, 29 to 49, and 61 to 81; these read MSLT…GLLL, SLLC…MVIL, and IILL…LVMV.

It belongs to the complex I subunit 4L family. As to quaternary structure, core subunit of respiratory chain NADH dehydrogenase (Complex I) which is composed of 45 different subunits.

It localises to the mitochondrion inner membrane. The catalysed reaction is a ubiquinone + NADH + 5 H(+)(in) = a ubiquinol + NAD(+) + 4 H(+)(out). Its function is as follows. Core subunit of the mitochondrial membrane respiratory chain NADH dehydrogenase (Complex I) which catalyzes electron transfer from NADH through the respiratory chain, using ubiquinone as an electron acceptor. Part of the enzyme membrane arm which is embedded in the lipid bilayer and involved in proton translocation. This is NADH-ubiquinone oxidoreductase chain 4L (MT-ND4L) from Platyrrhinus helleri (Heller's broad-nosed bat).